The following is a 904-amino-acid chain: Protein argonaute 4A (904 aa).

Disordered stretches follow at residues 1 to 33 (MESN…KKLS) and 143 to 166 (KSSA…VRRP). Over residues 11-21 (LPPPPPLPPNA) the composition is skewed to pro residues. Residues 144–156 (SSANGGSPGNDSP) show a composition bias toward low complexity. A PAZ domain is found at 274–388 (PVVDFLLANQ…FPIELCSLVP (115 aa)). The Piwi domain occupies 557-865 (FLLCVLAERK…AAAQVSQFIK (309 aa)). Positions 871 to 890 (ETSSSHGGHTSAGSAPVPEL) are disordered. Positions 872 to 885 (TSSSHGGHTSAGSA) are enriched in low complexity.

The protein belongs to the argonaute family. Ago subfamily.

Its function is as follows. Probably involved in the RNA silencing pathway. May bind to short RNAs such as microRNAs (miRNAs) or short interfering RNAs (siRNAs), and represses the translation of mRNAs which are complementary to them. In Oryza sativa subsp. japonica (Rice), this protein is Protein argonaute 4A (AGO4A).